The chain runs to 205 residues: Proteasome subunit beta type-3 (205 aa).

Position 31 is a phosphoserine (Ser-31). Residue Lys-70 forms a Glycyl lysine isopeptide (Lys-Gly) (interchain with G-Cter in ubiquitin) linkage.

Belongs to the peptidase T1B family. As to quaternary structure, the 26S proteasome consists of a 20S proteasome core and two 19S regulatory subunits. The 20S proteasome core is composed of 28 subunits that are arranged in four stacked rings, resulting in a barrel-shaped structure. The two end rings are each formed by seven alpha subunits, and the two central rings are each formed by seven beta subunits. The catalytic chamber with the active sites is on the inside of the barrel.

Its subcellular location is the cytoplasm. It is found in the nucleus. In terms of biological role, non-catalytic component of the proteasome which degrades poly-ubiquitinated proteins in the cytoplasm and in the nucleus. It is essential for the regulated turnover of proteins and for the removal of misfolded proteins. The proteasome is a multicatalytic proteinase complex that is characterized by its ability to cleave peptides with Arg, Phe, Tyr, Leu, and Glu adjacent to the leaving group at neutral or slightly basic pH. It has an ATP-dependent proteolytic activity. This subunit may participate in the trypsin-like activity of the enzyme complex. This Saccharomyces cerevisiae (strain ATCC 204508 / S288c) (Baker's yeast) protein is Proteasome subunit beta type-3 (PUP3).